Consider the following 511-residue polypeptide: MEKFEEISEKHKSRQQYFVYPLLFQEFLYAFAHDYGLNDSEPVEIVSCNNKKFSSLLVKRLIIRMYQQNFWINSVNHPNQDRLLDYKNFFYSEFFSQILSEGFSIVVEIPFSLRESFCPKEKEIPKFQNLRSIHSIFSFLEDKFLHLHYLSHIEIPYPIHLEILVQLLQYHIQDVPSLHLLRFFLNYNSNWNSFITSIKSFFLLKKENKRLFRFLYNSYVSEYEFFLLFLRKQSSCLPLASSGGFLERIHFSRKMEHFGIMDPGFFRKTLWFFMDPLMHYVRYQGKAILASKGTLFLKKKWKWYLVNFCQYSFSFWTQPRRIHLNQLANSCFDFLGYLSSVPKSPLLVRNQMLENSFLIDTRMIKFDTIVPATLLIGSLSKAQFCTGSGHPISKPIWTELSDWDILDRFGQICKNLFHYHSGSSKKRTLYRLKYILRLSCARTLARKHKSTVRTFMQRLGSVFLEEFFTEEDPVFSLMFTKTTLFYFRGSHSERIWYLDIIRINGLVNPRN.

The protein belongs to the intron maturase 2 family. MatK subfamily.

Its subcellular location is the plastid. It is found in the chloroplast. In terms of biological role, usually encoded in the trnK tRNA gene intron. Probably assists in splicing its own and other chloroplast group II introns. The polypeptide is Maturase K (Brachypodium distachyon (Purple false brome)).